Here is a 180-residue protein sequence, read N- to C-terminus: Superoxide dismutase [Cu-Zn] (180 aa).

A signal peptide spans 1-19; the sequence is MFMNLLTQVSNAIFPQVEA. Residues histidine 68, histidine 70, and histidine 85 each contribute to the Cu cation site. Residues cysteine 79 and cysteine 171 are joined by a disulfide bond. Zn(2+)-binding residues include histidine 85, histidine 93, histidine 102, and aspartate 105. Histidine 142 serves as a coordination point for Cu cation.

Belongs to the Cu-Zn superoxide dismutase family. In terms of assembly, homodimer. Cu cation is required as a cofactor. Zn(2+) serves as cofactor.

It is found in the cytoplasm. The catalysed reaction is 2 superoxide + 2 H(+) = H2O2 + O2. Its activity is regulated as follows. The insertion of copper which activates the protein requires glutathione. This is independent of copper chaperone for SOD1 (CCS), which activates orthologs. Protects cells against oxidative stress by converting superoxide radicals to hydrogen peroxide. Required for normal brood size. May be involved in regulating mpk-1 phosphorylation downstream of phosphatase ptp-2 during oocyte maturation. The polypeptide is Superoxide dismutase [Cu-Zn] (sod-1) (Caenorhabditis elegans).